The following is a 568-amino-acid chain: Vacuolar protein 8 (568 aa).

Residue G2 is the site of N-myristoyl glycine attachment. S-palmitoyl cysteine attachment occurs at residues C4, C5, and C7. 9 ARM repeats span residues 37 to 74 (DKDNYDFYSGGPLKALTTLVYSDNLNLQRSAALAFAEI), 75 to 114 (TEKYVRPVDREVLEPILILLQSHDPQIQIAACAALGNLAV), 116 to 155 (NENKILIVEMGGLEPLIEQMKSNNVEVQCNAVGCITNLAT), 157 to 196 (DDNKAKIAHSGALVPLTKLAKSKNIRVQRNATGALLNMTH), 198 to 237 (GENRKELVDAGAVPVLVSLLSSSDADVQYYCTTALSNIAV), 241 to 280 (NRRKLSQTEPRLVSKLVVLTDSPSARVKCQATLALRNLAS), 282 to 321 (TGYQLEIVRAGGLSHLVKLIQCNSMPLVLASVACIRNISI), 323 to 363 (PLNE…NLAA), and 407 to 446 (DNSKLELLDANILEALIPMTFSTNQEVAGNAAAALANLCS).

Belongs to the beta-catenin family.

It localises to the vacuole membrane. In terms of biological role, functions in both vacuole inheritance and protein targeting from the cytoplasm to vacuole. The polypeptide is Vacuolar protein 8 (VAC8) (Eremothecium gossypii (strain ATCC 10895 / CBS 109.51 / FGSC 9923 / NRRL Y-1056) (Yeast)).